Consider the following 97-residue polypeptide: MTKKKRENLGVALEIDGLEEKLSQCRRDLEAVNSRLHSRELSPEARRSLEKEKNSLMNKASNYEKELKFLRQENRKNMLLSVAIFILLTLVYAYWTM.

Residues 10–79 adopt a coiled-coil conformation; sequence GVALEIDGLE…LRQENRKNML (70 aa). A helical transmembrane segment spans residues 78–95; sequence MLLSVAIFILLTLVYAYW.

It is found in the membrane. The chain is Coiled-coil domain-containing protein 167 (CCDC167) from Homo sapiens (Human).